Here is a 269-residue protein sequence, read N- to C-terminus: Putative pyruvate, phosphate dikinase regulatory protein (269 aa).

Residue 147-154 (GLSRTSKT) participates in ADP binding.

This sequence belongs to the pyruvate, phosphate/water dikinase regulatory protein family. PDRP subfamily.

The enzyme catalyses N(tele)-phospho-L-histidyl/L-threonyl-[pyruvate, phosphate dikinase] + ADP = N(tele)-phospho-L-histidyl/O-phospho-L-threonyl-[pyruvate, phosphate dikinase] + AMP + H(+). It catalyses the reaction N(tele)-phospho-L-histidyl/O-phospho-L-threonyl-[pyruvate, phosphate dikinase] + phosphate + H(+) = N(tele)-phospho-L-histidyl/L-threonyl-[pyruvate, phosphate dikinase] + diphosphate. Bifunctional serine/threonine kinase and phosphorylase involved in the regulation of the pyruvate, phosphate dikinase (PPDK) by catalyzing its phosphorylation/dephosphorylation. This is Putative pyruvate, phosphate dikinase regulatory protein from Clostridium botulinum (strain ATCC 19397 / Type A).